Here is a 202-residue protein sequence, read N- to C-terminus: Na(+)-translocating NADH-quinone reductase subunit E (202 aa).

The next 6 helical transmembrane spans lie at 11 to 31 (SVFV…FLAI), 35 to 55 (IDAA…TVPV), 81 to 101 (FLGL…MEMV), 114 to 134 (GVFL…LLMV), 144 to 164 (VVFG…LAGI), and 182 to 202 (ITFI…GIAL).

Belongs to the NqrDE/RnfAE family. Composed of six subunits; NqrA, NqrB, NqrC, NqrD, NqrE and NqrF.

The protein resides in the cell inner membrane. It carries out the reaction a ubiquinone + n Na(+)(in) + NADH + H(+) = a ubiquinol + n Na(+)(out) + NAD(+). Its function is as follows. NQR complex catalyzes the reduction of ubiquinone-1 to ubiquinol by two successive reactions, coupled with the transport of Na(+) ions from the cytoplasm to the periplasm. NqrA to NqrE are probably involved in the second step, the conversion of ubisemiquinone to ubiquinol. This Saccharophagus degradans (strain 2-40 / ATCC 43961 / DSM 17024) protein is Na(+)-translocating NADH-quinone reductase subunit E.